A 367-amino-acid polypeptide reads, in one-letter code: Methylated-thiol--coenzyme M methyltransferase (367 aa).

Zn(2+) is bound by residues His-236, Cys-238, and Cys-313.

This sequence belongs to the uroporphyrinogen decarboxylase family. As to quaternary structure, homodimer. The cofactor is Zn(2+).

It catalyses the reaction methanethiol + coenzyme M = methyl-coenzyme M + hydrogen sulfide + H(+). In terms of biological role, methyltransferase involved in methanogenesis from methylated-thiols. Catalyzes two successive steps: mediates the transfer of a methyl group from the substrate to the cobalt cofactor of a methylated-thiol-specific corrinoid protein (MtsB), and the subsequent transfer of the methyl group from the corrinoid protein to coenzyme M. The polypeptide is Methylated-thiol--coenzyme M methyltransferase (mtsA) (Methanosarcina mazei (strain ATCC BAA-159 / DSM 3647 / Goe1 / Go1 / JCM 11833 / OCM 88) (Methanosarcina frisia)).